Consider the following 127-residue polypeptide: MIVAVGHDLIEIERIRRMLLREGPRAQKLFAPCELEYAARLSDPTPSLAARFAAKEAFQKVWPRPHGWRDVWVERERTPDGPFPFTPPVLGFTETIAEEMRERGWVAHLTLTHTKEHASAVVVLEER.

Mg(2+) is bound by residues Asp-8 and Glu-56.

This sequence belongs to the P-Pant transferase superfamily. AcpS family. The cofactor is Mg(2+).

The protein localises to the cytoplasm. The enzyme catalyses apo-[ACP] + CoA = holo-[ACP] + adenosine 3',5'-bisphosphate + H(+). Its function is as follows. Transfers the 4'-phosphopantetheine moiety from coenzyme A to a Ser of acyl-carrier-protein. This is Holo-[acyl-carrier-protein] synthase from Deinococcus deserti (strain DSM 17065 / CIP 109153 / LMG 22923 / VCD115).